The primary structure comprises 91 residues: Protein RacC (91 aa).

The sequence is that of Protein RacC (racC) from Escherichia coli (strain K12).